Reading from the N-terminus, the 716-residue chain is Polyribonucleotide nucleotidyltransferase (716 aa).

2 residues coordinate Mg(2+): Asp495 and Asp501. One can recognise a KH domain in the interval 562 to 621 (PRLFRIQINPEQIGLVIGPGGKTIRSITEQTGAKIDIEDTGAVTISAVDADSALRAKSII). One can recognise an S1 motif domain in the interval 631–699 (GDVYIGKVTR…QKGRVNLTRK (69 aa)).

The protein belongs to the polyribonucleotide nucleotidyltransferase family. It depends on Mg(2+) as a cofactor.

The protein localises to the cytoplasm. The catalysed reaction is RNA(n+1) + phosphate = RNA(n) + a ribonucleoside 5'-diphosphate. Its function is as follows. Involved in mRNA degradation. Catalyzes the phosphorolysis of single-stranded polyribonucleotides processively in the 3'- to 5'-direction. The protein is Polyribonucleotide nucleotidyltransferase of Synechococcus elongatus (strain ATCC 33912 / PCC 7942 / FACHB-805) (Anacystis nidulans R2).